Consider the following 414-residue polypeptide: Putative F-box/kelch-repeat protein At2g29800 (414 aa).

The interval Met1–Arg61 is disordered. Residues Lys20–Gln35 show a composition bias toward basic and acidic residues. A compositionally biased stretch (acidic residues) spans Asn40 to Glu54. In terms of domain architecture, F-box spans Pro58 to Leu105. Kelch repeat units follow at residues Lys163–Gly211, Arg212–Val258, Lys263–Val302, and Leu305–Ala349.

This is Putative F-box/kelch-repeat protein At2g29800 from Arabidopsis thaliana (Mouse-ear cress).